Consider the following 246-residue polypeptide: Deoxycytidylate 5-hydroxymethyltransferase (246 aa).

Cys-148 is an active-site residue.

The protein belongs to the thymidylate synthase family.

The catalysed reaction is dCMP + (6R)-5,10-methylene-5,6,7,8-tetrahydrofolate + H2O = 5-hydroxymethyl-dCMP + (6S)-5,6,7,8-tetrahydrofolate. This chain is Deoxycytidylate 5-hydroxymethyltransferase (42), found in Enterobacteria phage T6 (Bacteriophage T6).